The sequence spans 149 residues: Lipoprotein signal peptidase (149 aa).

The next 3 helical transmembrane spans lie at 24 to 44, 57 to 77, and 81 to 101; these read SHIA…LTNL, KMWF…YLLW, and GKWL…GNFI. Active-site residues include aspartate 111 and aspartate 127. Residues 122-142 traverse the membrane as a helical segment; the sequence is IFNFADSCLTVGVIFILIGVL.

The protein belongs to the peptidase A8 family.

The protein localises to the cell membrane. The enzyme catalyses Release of signal peptides from bacterial membrane prolipoproteins. Hydrolyzes -Xaa-Yaa-Zaa-|-(S,diacylglyceryl)Cys-, in which Xaa is hydrophobic (preferably Leu), and Yaa (Ala or Ser) and Zaa (Gly or Ala) have small, neutral side chains.. Its pathway is protein modification; lipoprotein biosynthesis (signal peptide cleavage). In terms of biological role, this protein specifically catalyzes the removal of signal peptides from prolipoproteins. This is Lipoprotein signal peptidase from Lactiplantibacillus plantarum (strain ATCC BAA-793 / NCIMB 8826 / WCFS1) (Lactobacillus plantarum).